A 481-amino-acid polypeptide reads, in one-letter code: MLPASGLAVLLVTALKFSTAAPSLPAASPRTSRNNYRLAQAYLDKYYTKKGGPQIGEMVARGGNSTVKKIKELQEFFGLRVTGKLDRATMDVIKRPRCGVPDVANYRLFPGEPKWKKNTLTYRISKYTPSMTPAEVDRAMEMALRAWSSAVPLNFVRINAGEADIMISFETGDHGDSYPFDGPRGTLAHAFAPGEGLGGDTHFDNAEKWTMGTNGFNLFTVAAHEFGHALGLAHSTDPSALMFPTYKYQNPYGFRLPKDDVKGIQALYGPRRAFSGKPTAPHGPPHNPSIPDLCDSNLSFDAVTMLGKELLLFRDRIFWRRQVHLMSGIRPSTITSSFPQLMSNVDAAYEVAERGTAYFFKGPHYWITRGFQMQGPPRTIYDFGFPRYVQRIDAAVYLKDAQKTLFFVGDEYYSYDERKRKMEKDYPKSTEEEFSGVNGQIDAAVELNGYIYFFSGPKAYKSDTEKEDVVSELKSSSWIGC.

The first 20 residues, 1 to 20, serve as a signal peptide directing secretion; it reads MLPASGLAVLLVTALKFSTA. Residues 21 to 105 constitute a propeptide that is removed on maturation; that stretch reads APSLPAASPR…PRCGVPDVAN (85 aa). Asparagine 64 is a glycosylation site (N-linked (GlcNAc...) asparagine). The short motif at 96–103 is the Cysteine switch element; it reads PRCGVPDV. Cysteine 98 lines the Zn(2+) pocket. Glutamate 162, alanine 163, and aspartate 164 together coordinate Ca(2+). Histidine 174 and aspartate 176 together coordinate Zn(2+). Ca(2+) is bound by residues aspartate 181, glycine 182, arginine 184, and threonine 186. Histidine 189 provides a ligand contact to Zn(2+). Residues glutamate 195, glycine 196, glycine 198, and aspartate 200 each contribute to the Ca(2+) site. Position 202 (histidine 202) interacts with Zn(2+). Residues aspartate 204 and glutamate 207 each coordinate Ca(2+). A Zn(2+)-binding site is contributed by histidine 224. The active site involves glutamate 225. Zn(2+) is bound by residues histidine 228 and histidine 234. Hemopexin repeat units lie at residues 291–341, 342–387, 389–437, and 438–481; these read PDLC…FPQL, MSNV…GFPR, VQRI…FSGV, and NGQI…WIGC. A disulfide bridge connects residues cysteine 294 and cysteine 481. The N-linked (GlcNAc...) asparagine glycan is linked to asparagine 297.

It belongs to the peptidase M10A family. The cofactor is Zn(2+). Requires Ca(2+) as cofactor. Post-translationally, autoactivates at least at the 105-Asn-|-Tyr-106 site. In terms of tissue distribution, expressed in the enamel organ.

Its subcellular location is the secreted. It localises to the extracellular space. The protein localises to the extracellular matrix. Functionally, degrades amelogenin, the major protein component of the enamel matrix and two of the macromolecules characterizing the cartilage extracellular matrix: aggrecan and the cartilage oligomeric matrix protein (COMP). May play a central role in tooth enamel formation. Cleaves aggrecan at the '360-Ser-|-Phe-361' site. This chain is Matrix metalloproteinase-20 (MMP20), found in Bos taurus (Bovine).